The sequence spans 439 residues: Adenylosuccinate synthetase (439 aa).

Residues 25–31 (GDEGKGK) and 53–55 (GHT) contribute to the GTP site. Asp-26 (proton acceptor) is an active-site residue. Mg(2+) contacts are provided by Asp-26 and Gly-53. IMP-binding positions include 26–29 (DEGK), 51–54 (NAGH), Thr-146, Arg-160, Asn-237, Thr-252, and Arg-316. The active-site Proton donor is His-54. 312–318 (VTTGRRR) serves as a coordination point for substrate. GTP-binding positions include Arg-318, 344–346 (KLD), and 426–428 (GVG).

This sequence belongs to the adenylosuccinate synthetase family. Homodimer. Mg(2+) serves as cofactor.

It localises to the cytoplasm. The enzyme catalyses IMP + L-aspartate + GTP = N(6)-(1,2-dicarboxyethyl)-AMP + GDP + phosphate + 2 H(+). It participates in purine metabolism; AMP biosynthesis via de novo pathway; AMP from IMP: step 1/2. Plays an important role in the de novo pathway and in the salvage pathway of purine nucleotide biosynthesis. Catalyzes the first committed step in the biosynthesis of AMP from IMP. The protein is Adenylosuccinate synthetase of Mycosarcoma maydis (Corn smut fungus).